The following is a 460-amino-acid chain: Orexin receptor type 2 (460 aa).

Residues 1-54 (MSSTKLEDSLSRRNWSSASELNETQEPFLNPTDYDDEEFLRYLWREYLHPKEYE) lie on the Extracellular side of the membrane. 2 N-linked (GlcNAc...) asparagine glycosylation sites follow: asparagine 14 and asparagine 22. The interval 33–49 (DYDDEEFLRYLWREYLH) is required for response to orexin-A. The helical transmembrane segment at 55–75 (WVLIAGYIIVFVVALIGNVLV) threads the bilayer. At 76 to 88 (CVAVWKNHHMRTV) the chain is on the cytoplasmic side. A helical transmembrane segment spans residues 89–110 (TNYFIVNLSLADVLVTITCLPA). Residues 111 to 127 (TLVVDITETWFFGQSLC) are Extracellular-facing. Cysteine 127 and cysteine 210 form a disulfide bridge. A helical transmembrane segment spans residues 128 to 150 (KVIPYLQTVSVSVSVLTLSCIAL). Over 151–170 (DRWYAICHPLMFKSTAKRAR) the chain is Cytoplasmic. A helical membrane pass occupies residues 171–191 (NSIVVIWIVSCIIMIPQAIVM). At 192 to 222 (ECSSMLPGLANKTTLFTVCDEHWGGEVYPKM) the chain is on the extracellular side. The N-linked (GlcNAc...) asparagine glycan is linked to asparagine 202. The helical transmembrane segment at 223 to 243 (YHICFFLVTYMAPLCLMILAY) threads the bilayer. Residues 244–304 (LQIFRKLWCR…QIRARRKTAR (61 aa)) are Cytoplasmic-facing. A helical transmembrane segment spans residues 305–326 (MLMVVLLVFAICYLPISILNVL). Residues 327-342 (KRVFGMFTHTEDRETV) are Extracellular-facing. A helical membrane pass occupies residues 343 to 366 (YAWFTFSHWLVYANSAANPIIYNF). Residues 367-460 (LSGKFREEFK…SSLLSTWLEV (94 aa)) are Cytoplasmic-facing.

This sequence belongs to the G-protein coupled receptor 1 family. In terms of tissue distribution, widely expressed. Isoform 2 not detected in skeletal muscle and kidney.

Its subcellular location is the cell membrane. In terms of biological role, nonselective, high-affinity receptor for both orexin-A and orexin-B neuropeptides. Triggers an increase in cytoplasmic Ca(2+) levels in response to orexin-A binding. The protein is Orexin receptor type 2 (Hcrtr2) of Mus musculus (Mouse).